The primary structure comprises 1140 residues: DNA damage-binding protein 1 (1140 aa).

Ser2 carries the post-translational modification N-acetylserine. Positions 2-768 (SYNYVVTAQK…QALSSSVSSS (767 aa)) are interaction with CDT1. A WD repeat beta-propeller A region spans residues 13 to 356 (TAVNGCVTGH…VVAMETFTNL (344 aa)). Positions 391–708 (RNGIGIHEHA…LTIGTIDEIQ (318 aa)) are WD repeat beta-propeller B; Interaction with CUL4A. Positions 709 to 1043 (KLHIRTVPLY…NGMIGLVTSL (335 aa)) are WD repeat beta-propeller C. The interval 771–1140 (FSSSTAPHET…KVVEELTRIH (370 aa)) is interaction with CDT1 and CUL4A. Residue Lys1067 is modified to N6-acetyllysine. Lys1121 participates in a covalent cross-link: Glycyl lysine isopeptide (Lys-Gly) (interchain with G-Cter in SUMO2). At Thr1125 the chain carries Phosphothreonine.

It belongs to the DDB1 family. In terms of assembly, component of the UV-DDB complex which includes DDB1 and DDB2; the heterodimer dimerizes to give rise to a heterotetramer when bound to damaged DNA. The UV-DDB complex interacts with monoubiquitinated histone H2A and binds to XPC via the DDB2 subunit. Component of numerous DCX (DDB1-CUL4-X-box) E3 ubiquitin-protein ligase complexes which consist of a core of DDB1, CUL4A or CUL4B and RBX1. DDB1 may recruit specific substrate targeting subunits to the DCX complex. These substrate targeting subunits are generally known as DCAF (DDB1- and CUL4-associated factor) or CDW (CUL4-DDB1-associated WD40-repeat) proteins. Interacts with AMBRA1, ATG16L1, BTRC, CRBN, DCAF1, DCAF4, DCAF5, DCAF6, DCAF7, DCAF8, DCAF9, DCAF10, DCAF11, DCAF12, DCAF15, DCAF16, DCAF17, DDA1, DET1, DTL, ERCC8, FBXW5, FBXW8, GRWD1, KATNB1, NLE1, NUP43, PAFAH1B1, PHIP, PWP1, RBBP4, RBBP5, RBBP7, COP1, SNRNP40, DCAF1, WDR5, WDR5B, WDR12, WDR26, WDR39, WDR42, WDR53, WDR59, WDR61, WSB1, WSB2, LRWD1 and WDTC1. DCX complexes may associate with the COP9 signalosome, and this inhibits the E3 ubiquitin-protein ligase activity of the complex. Interacts with NF2, TSC1 and TSC2. Interacts with AGO1 and AGO2. Associates with the E3 ligase complex containing DYRK2, EDD/UBR5, DDB1 and DCAF1 proteins (EDVP complex). Interacts directly with DYRK2. DCX(DTL) complex interacts with FBXO11; does not ubiquitinate and degradate FBXO11. Interacts with TRPC4AP. Interacts with CRY1 and CRY2. The DDB1-CUL4A complex interacts with CRY1. May also interact with DCUN1D1, DCUN1D2, DCUN1D3 and DCUN1D5. Component of the DCX(DCAF13) E3 ubiquitin ligase complex, at least composed of CUL4 (CUL4A or CUL4B), DDB1, DCAF13 and RBX1. Interacts with DCAF13 (via WD40 domain). In terms of processing, phosphorylated by ABL1. Post-translationally, ubiquitinated by CUL4A. Subsequently degraded by ubiquitin-dependent proteolysis. Acetylated, promoting interaction with CUL4 (CUL4A or CUL4B) and subsequent formation of DCX (DDB1-CUL4-X-box) E3 ubiquitin-protein ligase complexes. Deacetylation by SIRT7 impairs the interaction with CUL4 (CUL4A or CUL4B) and formation of DCX (DDB1-CUL4-X-box) E3 ubiquitin-protein ligase complexes.

Its subcellular location is the cytoplasm. It localises to the nucleus. It participates in protein modification; protein ubiquitination. Protein, which is both involved in DNA repair and protein ubiquitination, as part of the UV-DDB complex and DCX (DDB1-CUL4-X-box) complexes, respectively. Core component of the UV-DDB complex (UV-damaged DNA-binding protein complex), a complex that recognizes UV-induced DNA damage and recruit proteins of the nucleotide excision repair pathway (the NER pathway) to initiate DNA repair. The UV-DDB complex preferentially binds to cyclobutane pyrimidine dimers (CPD), 6-4 photoproducts (6-4 PP), apurinic sites and short mismatches. Also functions as a component of numerous distinct DCX (DDB1-CUL4-X-box) E3 ubiquitin-protein ligase complexes which mediate the ubiquitination and subsequent proteasomal degradation of target proteins. The functional specificity of the DCX E3 ubiquitin-protein ligase complex is determined by the variable substrate recognition component recruited by DDB1. DCX(DDB2) (also known as DDB1-CUL4-ROC1, CUL4-DDB-ROC1 and CUL4-DDB-RBX1) may ubiquitinate histone H2A, histone H3 and histone H4 at sites of UV-induced DNA damage. The ubiquitination of histones may facilitate their removal from the nucleosome and promote subsequent DNA repair. DCX(DDB2) also ubiquitinates XPC, which may enhance DNA-binding by XPC and promote NER. DCX(DTL) plays a role in PCNA-dependent polyubiquitination of CDT1 and MDM2-dependent ubiquitination of TP53 in response to radiation-induced DNA damage and during DNA replication. DCX(ERCC8) (the CSA complex) plays a role in transcription-coupled repair (TCR). The DDB1-CUL4A-DTL E3 ligase complex regulates the circadian clock function by mediating the ubiquitination and degradation of CRY1. DDB1-mediated CRY1 degradation promotes FOXO1 protein stability and FOXO1-mediated gluconeogenesis in the liver. By acting on TET dioxygenses, essential for oocyte maintenance at the primordial follicle stage, hence essential for female fertility. Maternal factor required for proper zygotic genome activation and genome reprogramming. This chain is DNA damage-binding protein 1 (DDB1), found in Bos taurus (Bovine).